The sequence spans 396 residues: Enoyl-[acyl-carrier-protein] reductase [NADH] (396 aa).

NAD(+) is bound by residues 48 to 53, 74 to 75, 111 to 112, and 139 to 140; these read GASTGY, FE, DA, and LA. Tyr-225 is a substrate binding site. The Proton donor role is filled by Tyr-235. NAD(+)-binding positions include Lys-244 and 273 to 275; that span reads VVT.

The protein belongs to the TER reductase family. Monomer.

The enzyme catalyses a 2,3-saturated acyl-[ACP] + NAD(+) = a (2E)-enoyl-[ACP] + NADH + H(+). It functions in the pathway lipid metabolism; fatty acid biosynthesis. Functionally, involved in the final reduction of the elongation cycle of fatty acid synthesis (FAS II). Catalyzes the reduction of a carbon-carbon double bond in an enoyl moiety that is covalently linked to an acyl carrier protein (ACP). The sequence is that of Enoyl-[acyl-carrier-protein] reductase [NADH] from Teredinibacter turnerae (strain ATCC 39867 / T7901).